The chain runs to 580 residues: Formate--tetrahydrofolate ligase (580 aa).

ATP is bound at residue 83 to 90 (TPMGEGKT).

It belongs to the formate--tetrahydrofolate ligase family.

It catalyses the reaction (6S)-5,6,7,8-tetrahydrofolate + formate + ATP = (6R)-10-formyltetrahydrofolate + ADP + phosphate. The protein operates within one-carbon metabolism; tetrahydrofolate interconversion. In Haloquadratum walsbyi (strain DSM 16790 / HBSQ001), this protein is Formate--tetrahydrofolate ligase.